The following is a 243-amino-acid chain: UPF0246 protein M6_Spy1787 (243 aa).

This sequence belongs to the UPF0246 family.

This Streptococcus pyogenes serotype M6 (strain ATCC BAA-946 / MGAS10394) protein is UPF0246 protein M6_Spy1787.